Consider the following 540-residue polypeptide: MIFHGEQLENHDKPVHEVLLERFKVHQEKDPDNVAFVTAENEDDSLGFQQLGKKVLQISEWFVENGYKKGDVFLLASYNNWRCFAAALGAWRAGLIVSAAASQFTSFEMNYQIEDSQSQVILVDKHTLPVVQEACKNLKFVKQIISISANPPSPVIKFDVLTSRLVRNLKMPLIDPKNDIVFLPYSSGTTGKPKGVMISHLNFSMMLESSLRFFDANAKAIGLPPDFVLPYDLHFLPMYHAMGMFRTLLTSYRGTTQIMFTKFDMELMLKNIEKYSIMVLSLVPAIAVRMLNSPLLQKYDVSSLVSVTVGSAPFPESASKKLKQLLPNVNIVQGYGMTELTFATHLQSPGSPDGSVGRLVPGTSMKVKKEDGTLCGPHEIGELWIKGPQMMKGYWKKEQQTNELLDEHGFMRTGDIVYFDKNGETFICDRIKELIKVNAKQVAPAELESVILEHDDVADVCVFGVDDASSGERPVACVVSKRGRDMETSKAIMKHINQKLARYKHIKEIEFVSEIMRTGTGKLLRRAMKKAFLDAKKAKL.

Residues 186–194 (SSGTTGKPK), aspartate 415, arginine 430, and lysine 522 contribute to the ATP site. The Microbody targeting signal signature appears at 538-540 (AKL).

It belongs to the ATP-dependent AMP-binding enzyme family. As to expression, expressed in intestine.

It is found in the peroxisome. The catalysed reaction is nonanoate + ATP + CoA = nonanoyl-CoA + AMP + diphosphate. The enzyme catalyses IC-asc-C7 + ATP + CoA = IC-asc-C7-CoA + AMP + diphosphate. It catalyses the reaction IC-asc-C9 + ATP + CoA = IC-asc-C9-CoA + AMP + diphosphate. In terms of biological role, plays a role in ascaroside pheromones biosynthesis, which regulates development and behavior. Specifically, activates the side chain of medium-chain indol-3-carbonyl (IC)-ascarosides for shortening through beta-oxidation. Converts IC-asc-C7 and IC-asc-C9 into IC-asc-C7-CoA and IC-asc-C9-CoA, respectively. May play a role in fatty-acid metabolism by activating and converting nonanoate (C9) into nonanoyl-CoA (C9-CoA). In Caenorhabditis elegans, this protein is Acyl-CoA synthetase 7.